The chain runs to 470 residues: Chromosomal replication initiator protein DnaA (470 aa).

The interval 1–79 (MTDDTWGLLR…AVQRLAFKVA (79 aa)) is domain I, interacts with DnaA modulators. The interval 79–128 (AANSPTRPVQPTMSEAIEEPAPLQTTVVDQLGNQEGNTSVKSPPEDLQAA) is domain II. The interval 129 to 350 (PLDPRFTFDS…GALTRLFAFA (222 aa)) is domain III, AAA+ region. ATP-binding residues include glycine 173, glycine 175, lysine 176, and threonine 177. Positions 351–470 (SLVGREIDMD…VEMLRRSLEA (120 aa)) are domain IV, binds dsDNA.

It belongs to the DnaA family. In terms of assembly, oligomerizes as a right-handed, spiral filament on DNA at oriC.

It is found in the cytoplasm. Functionally, plays an essential role in the initiation and regulation of chromosomal replication. ATP-DnaA binds to the origin of replication (oriC) to initiate formation of the DNA replication initiation complex once per cell cycle. Binds the DnaA box (a 9 base pair repeat at the origin) and separates the double-stranded (ds)DNA. Forms a right-handed helical filament on oriC DNA; dsDNA binds to the exterior of the filament while single-stranded (ss)DNA is stabiized in the filament's interior. The ATP-DnaA-oriC complex binds and stabilizes one strand of the AT-rich DNA unwinding element (DUE), permitting loading of DNA polymerase. After initiation quickly degrades to an ADP-DnaA complex that is not apt for DNA replication. Binds acidic phospholipids. The chain is Chromosomal replication initiator protein DnaA from Ruegeria sp. (strain TM1040) (Silicibacter sp.).